The sequence spans 368 residues: MLWKGFQKPKRLAFDSESLTDKYGHFWAQPFERGFGTTIGNALRRVLLSSIEGAAITAVKIEGVLHEFQSIPGVVEDATDIILNLKQIPFRLNGDAPKAIYLRAEQPGIVTSGMIETDADVEILDKDVYIATISEGGKLDMEMRLKKGRGYVSADKNFDEDLGLGFIPIDSVHSPVRKCNYSVEAARLGQITDYDKLSIELWTNGSVNPADALGLAAKLLKDHMNIFINFEEEIEASHAEDRKPEIRNENLNRSVEELELSVRSYNCLKNANIQTIGELVQKTEAEMLKTKNFGRKSLNEIKEILASMGLSLGMKIDEHGNAVAPPPGSQPAPSYGGYPGSYGTGGTFGGGGNYGGGGGFGGDNNPGF.

Residues 1–231 (MLWKGFQKPK…DHMNIFINFE (231 aa)) are alpha N-terminal domain (alpha-NTD). Residues 243–368 (KPEIRNENLN…GFGGDNNPGF (126 aa)) are alpha C-terminal domain (alpha-CTD).

The protein belongs to the RNA polymerase alpha chain family. Homodimer. The RNAP catalytic core consists of 2 alpha, 1 beta, 1 beta' and 1 omega subunit. When a sigma factor is associated with the core the holoenzyme is formed, which can initiate transcription.

The catalysed reaction is RNA(n) + a ribonucleoside 5'-triphosphate = RNA(n+1) + diphosphate. Its function is as follows. DNA-dependent RNA polymerase catalyzes the transcription of DNA into RNA using the four ribonucleoside triphosphates as substrates. This is DNA-directed RNA polymerase subunit alpha from Koribacter versatilis (strain Ellin345).